Reading from the N-terminus, the 497-residue chain is RNA polymerase sigma factor SigA (497 aa).

Disordered stretches follow at residues Met-1–Ser-20 and Lys-62–Leu-86. A compositionally biased stretch (basic and acidic residues) spans Thr-63–Pro-73. Over residues Lys-74–Ala-84 the composition is skewed to basic residues. The interval Leu-250–Thr-320 is sigma-70 factor domain-2. Positions Asp-274–Gln-277 match the Interaction with polymerase core subunit RpoC motif. Residues Glu-329 to Phe-410 form a sigma-70 factor domain-3 region. The segment at Leu-423–His-478 is sigma-70 factor domain-4. Residues Leu-451–Asn-470 constitute a DNA-binding region (H-T-H motif).

It belongs to the sigma-70 factor family. RpoD/SigA subfamily. In terms of assembly, interacts transiently with the RNA polymerase catalytic core.

The protein localises to the cytoplasm. Its function is as follows. Sigma factors are initiation factors that promote the attachment of RNA polymerase to specific initiation sites and are then released. This sigma factor is the primary sigma factor during exponential growth. The chain is RNA polymerase sigma factor SigA from Mycoplasma genitalium (strain ATCC 33530 / DSM 19775 / NCTC 10195 / G37) (Mycoplasmoides genitalium).